A 129-amino-acid polypeptide reads, in one-letter code: Iron-sulfur cluster assembly 1 homolog, mitochondrial (129 aa).

The N-terminal 12 residues, 1 to 12 (MSASLVRATVRA), are a transit peptide targeting the mitochondrion. Residues Cys-57, Cys-121, and Cys-123 each coordinate Fe cation.

Belongs to the HesB/IscA family. As to quaternary structure, interacts with CRY2, but not with CRY1 (in vitro).

The protein localises to the mitochondrion. Its function is as follows. Involved in the maturation of mitochondrial 4Fe-4S proteins functioning late in the iron-sulfur cluster assembly pathway. Probably involved in the binding of an intermediate of Fe/S cluster assembly. The polypeptide is Iron-sulfur cluster assembly 1 homolog, mitochondrial (Isca1) (Mus musculus (Mouse)).